The chain runs to 404 residues: Cysteine desulfurase IscS (404 aa).

Residues 75 to 76 (AT), N155, Q183, and 203 to 205 (SGH) contribute to the pyridoxal 5'-phosphate site. Position 206 is an N6-(pyridoxal phosphate)lysine (K206). T243 is a pyridoxal 5'-phosphate binding site. C328 (cysteine persulfide intermediate) is an active-site residue. C328 contacts [2Fe-2S] cluster.

Belongs to the class-V pyridoxal-phosphate-dependent aminotransferase family. NifS/IscS subfamily. Homodimer. Forms a heterotetramer with IscU, interacts with other sulfur acceptors. It depends on pyridoxal 5'-phosphate as a cofactor.

It localises to the cytoplasm. The catalysed reaction is (sulfur carrier)-H + L-cysteine = (sulfur carrier)-SH + L-alanine. Its pathway is cofactor biosynthesis; iron-sulfur cluster biosynthesis. In terms of biological role, master enzyme that delivers sulfur to a number of partners involved in Fe-S cluster assembly, tRNA modification or cofactor biosynthesis. Catalyzes the removal of elemental sulfur atoms from cysteine to produce alanine. Functions as a sulfur delivery protein for Fe-S cluster synthesis onto IscU, an Fe-S scaffold assembly protein, as well as other S acceptor proteins. This is Cysteine desulfurase IscS from Shewanella oneidensis (strain ATCC 700550 / JCM 31522 / CIP 106686 / LMG 19005 / NCIMB 14063 / MR-1).